Here is a 160-residue protein sequence, read N- to C-terminus: Cytochrome b6-f complex subunit 4 (160 aa).

3 consecutive transmembrane segments (helical) span residues 36 to 56 (LLYI…GLAV), 95 to 115 (LLGV…PFPE), and 131 to 151 (TVFS…ALPI).

The protein belongs to the cytochrome b family. PetD subfamily. In terms of assembly, the 4 large subunits of the cytochrome b6-f complex are cytochrome b6, subunit IV (17 kDa polypeptide, petD), cytochrome f and the Rieske protein, while the 4 small subunits are petG, petL, petM and petN. The complex functions as a dimer.

It is found in the plastid. The protein localises to the chloroplast thylakoid membrane. In terms of biological role, component of the cytochrome b6-f complex, which mediates electron transfer between photosystem II (PSII) and photosystem I (PSI), cyclic electron flow around PSI, and state transitions. In Huperzia lucidula (Shining clubmoss), this protein is Cytochrome b6-f complex subunit 4.